Consider the following 107-residue polypeptide: UPF0145 protein ESA_02470 (107 aa).

The protein belongs to the UPF0145 family.

This chain is UPF0145 protein ESA_02470, found in Cronobacter sakazakii (strain ATCC BAA-894) (Enterobacter sakazakii).